The primary structure comprises 135 residues: Large ribosomal subunit protein eL27 (135 aa).

The protein belongs to the eukaryotic ribosomal protein eL27 family.

This Pisum sativum (Garden pea) protein is Large ribosomal subunit protein eL27 (RPL27).